Reading from the N-terminus, the 66-residue chain is Alpha-bisabolene synthase (66 aa).

This sequence belongs to the terpene synthase family. Tpsd subfamily. Mn(2+) is required as a cofactor. It depends on K(+) as a cofactor.

It is found in the cytoplasm. It carries out the reaction (2E,6E)-farnesyl diphosphate = (E,R)-alpha-bisabolene + diphosphate. It functions in the pathway terpene metabolism; oleoresin biosynthesis. Its function is as follows. Involved in defensive oleoresin formation in conifers in response to insect attack or other injury. Involved in sesquiterpene (C15) olefins biosynthesis. In Pseudotsuga menziesii (Douglas-fir), this protein is Alpha-bisabolene synthase.